We begin with the raw amino-acid sequence, 156 residues long: Arginine repressor (156 aa).

This sequence belongs to the ArgR family.

Its subcellular location is the cytoplasm. Its pathway is amino-acid biosynthesis; L-arginine biosynthesis [regulation]. Regulates arginine biosynthesis genes. The polypeptide is Arginine repressor (Shewanella loihica (strain ATCC BAA-1088 / PV-4)).